A 143-amino-acid chain; its full sequence is Hemoglobin cathodic subunit alpha (143 aa).

S2 carries the post-translational modification N-acetylserine. Residues 2–143 form the Globin domain; sequence SLTAKDKSLI…LGAALSDKYR (142 aa). H60 is a binding site for O2. H89 lines the heme b pocket.

This sequence belongs to the globin family. As to quaternary structure, heterotetramer of two alpha chains and two beta chains. Red blood cells.

Functionally, involved in oxygen transport from gills to the various peripheral tissues. This is Hemoglobin cathodic subunit alpha from Anguilla anguilla (European freshwater eel).